The sequence spans 248 residues: tRNA pseudouridine synthase A (248 aa).

The Nucleophile role is filled by Asp55. Tyr114 is a substrate binding site.

It belongs to the tRNA pseudouridine synthase TruA family. In terms of assembly, homodimer.

It catalyses the reaction uridine(38/39/40) in tRNA = pseudouridine(38/39/40) in tRNA. Its function is as follows. Formation of pseudouridine at positions 38, 39 and 40 in the anticodon stem and loop of transfer RNAs. In Rhodopseudomonas palustris (strain ATCC BAA-98 / CGA009), this protein is tRNA pseudouridine synthase A.